The chain runs to 153 residues: Probable histone H2A.4 (153 aa).

Residues 1–12 (MDSGTKVKKGAA) are compositionally biased toward basic residues. 2 disordered regions span residues 1–30 (MDSG…RSVK) and 129–153 (KSEK…PKKS). Over residues 133-147 (AASTTKTPKSPSKAT) the composition is skewed to low complexity. The SPKK motif signature appears at 149-152 (SPKK).

This sequence belongs to the histone H2A family. In terms of assembly, the nucleosome is a histone octamer containing two molecules each of H2A, H2B, H3 and H4 assembled in one H3-H4 heterotetramer and two H2A-H2B heterodimers. The octamer wraps approximately 147 bp of DNA. In terms of processing, not ubiquitinated.

The protein localises to the nucleus. Its subcellular location is the chromosome. In terms of biological role, core component of nucleosome. Nucleosomes wrap and compact DNA into chromatin, limiting DNA accessibility to the cellular machineries which require DNA as a template. Histones thereby play a central role in transcription regulation, DNA repair, DNA replication and chromosomal stability. DNA accessibility is regulated via a complex set of post-translational modifications of histones, also called histone code, and nucleosome remodeling. The sequence is that of Probable histone H2A.4 from Arabidopsis thaliana (Mouse-ear cress).